Reading from the N-terminus, the 362-residue chain is Aminomethyltransferase (362 aa).

It belongs to the GcvT family. In terms of assembly, the glycine cleavage system is composed of four proteins: P, T, L and H.

It carries out the reaction N(6)-[(R)-S(8)-aminomethyldihydrolipoyl]-L-lysyl-[protein] + (6S)-5,6,7,8-tetrahydrofolate = N(6)-[(R)-dihydrolipoyl]-L-lysyl-[protein] + (6R)-5,10-methylene-5,6,7,8-tetrahydrofolate + NH4(+). In terms of biological role, the glycine cleavage system catalyzes the degradation of glycine. This chain is Aminomethyltransferase, found in Chromobacterium violaceum (strain ATCC 12472 / DSM 30191 / JCM 1249 / CCUG 213 / NBRC 12614 / NCIMB 9131 / NCTC 9757 / MK).